A 959-amino-acid chain; its full sequence is Bifunctional premutilin synthase (959 aa).

The class II diterpene cyclase stretch occupies residues 1-542 (MGLSEDLHAR…ALNVPIPRFD (542 aa)). The DXDD motif signature appears at 309–312 (DADM). The For class II diterpene cyclase activity role is filled by D311. The interval 543–959 (PSSISTLPAI…TANGSNGIHH (417 aa)) is class I diterpene synthase. The For class I diterpene synthase activity role is filled by D649. The Mg(2+) site is built by D649, D653, and N824. The short motif at 649-653 (DDYLD) is the DDXXD motif element. Residues 931 to 959 (KGTNGVKKINGSSTNGTKVTANGSNGIHH) are disordered. Positions 940–959 (NGSSTNGTKVTANGSNGIHH) are enriched in polar residues.

The protein belongs to the terpene synthase family. Mg(2+) is required as a cofactor.

The protein operates within secondary metabolite biosynthesis; terpenoid biosynthesis. Bifunctional premutilin synthase; part of the gene cluster that mediates the biosynthesis of pleuromutilin, a tricyclic diterpene showing antibacterial properties. The geranylgeranyl diphosphate (GGPP) synthase catalyzes the first step in pleuromutilin biosynthesis. GGPP is then substrate of the premutilin synthase (PS) to yield premutilin. Premutilin synthase is a bifunctional enzyme composed of the fusion of a class II diterpene cyclase (DTC) and a class I diterpene synthase (DTS), with the corresponding domains and active sites containing characteristic aspartate-rich motifs. GGPP is first converted to mutildienyl-diphosphate (MPP) at the class II DTC site. MPP is subsequently further cyclized at the class I DTS site, followed by a 1,5-hydride shift and addition of water prior to terminating deprotonation, to yield premutilin. In addition to the aforementioned GGPP synthase and bifunctional diterpene synthase, the cluster also contains three cytochrome P450 monooxygenases, a short-chain alcohol dehydrogenase, and an acyltransferase, involved in the conversion of premutilin to pleuromutilin. The cytochrome P450 monooxygenases P450-1 and P450-2 hydroxylate premutilin at C-11 and C-3, respectively, producing 11-hydroxypremutilin and 3-hydroxypremutilin. The combination of the actions of both ple5 and ple6 leads to the production of 3,11-dihydroxypremutilin. The short chain dehydrogenase SDR further converts 3,11-dihydroxypremutilin into mutilin. The acetyltransferase ATF then acetylates mutilin to produce 14-O-acetylmutilin. Finally, the cytochrome P450 monooxygenase P450-3 catalyzes hydroxylation on the alpha position of the acetyl side chain of 14-O-acetylmutilin to yield pleuromutilin. In Clitopilus passeckerianus (Pleurotus passeckerianus), this protein is Bifunctional premutilin synthase.